The following is a 464-amino-acid chain: L-cystine uptake protein TcyP (464 aa).

Helical transmembrane passes span 3–23 (TLLV…LYYM), 34–54 (VFTA…IYEP), 73–93 (YVKL…ISAF), 107–127 (GLII…GIAA), 184–204 (PTST…FIGV), 225–245 (IVMR…LALM), 263–283 (FVLA…LLIA), 347–367 (AGIY…IDPL), 371–391 (FILT…GVGG), and 395–415 (FAAL…ALVI).

It belongs to the dicarboxylate/amino acid:cation symporter (DAACS) (TC 2.A.23) family.

Its subcellular location is the membrane. Its function is as follows. Mediates uptake of L-cystine, the oxidized form of L-cysteine. The polypeptide is L-cystine uptake protein TcyP (Bacillus thuringiensis (strain Al Hakam)).